The primary structure comprises 29 residues: Cyclotide psyleio B (29 aa).

Positions 1-29 form a cross-link, cyclopeptide (Gly-Arg); sequence GDLPICGETCFGGTCNTPGCVCAWPVCNR. 3 disulfides stabilise this stretch: cysteine 6–cysteine 20, cysteine 10–cysteine 22, and cysteine 15–cysteine 27.

This is a cyclic peptide.

In terms of biological role, probably participates in a plant defense mechanism. The protein is Cyclotide psyleio B of Psychotria brachyceras.